An 898-amino-acid polypeptide reads, in one-letter code: Coiled-coil domain-containing protein 186 (898 aa).

Disordered regions lie at residues methionine 1–lysine 43, asparagine 68–asparagine 95, and arginine 702–alanine 749. Residue serine 2 is modified to N-acetylserine. Residues lysine 82–asparagine 95 are compositionally biased toward polar residues. Residues lysine 201–serine 712 are a coiled coil. The span at arginine 703–valine 717 shows a compositional bias: basic and acidic residues. Residues serine 718 to serine 734 are compositionally biased toward low complexity. Position 740 is a phosphoserine (serine 740). 2 coiled-coil regions span residues alanine 759–tyrosine 803 and lysine 855–arginine 894.

The sequence is that of Coiled-coil domain-containing protein 186 (CCDC186) from Homo sapiens (Human).